Reading from the N-terminus, the 207-residue chain is MSRYRGPRLRIIRRLRNLPGLTNKLVESKKNQASGNDQSNQKKVSQYCIRLEAKQRLRFNYGLTERQLLNYVRIARCAKGSTGQILLQLLEMRLDNILFRLGVVPTIPSARQLINHRHILVNNRIVDIPSFHCKPKDIITIGAPKTYQSIITKRIEAFAKDQIPDHLTLSLSEQKKPKGFVNYLINRESIGLKINELLVVEYYSRKA.

The 65-residue stretch at Met92–Glu156 folds into the S4 RNA-binding domain.

The protein belongs to the universal ribosomal protein uS4 family. Part of the 30S ribosomal subunit. Contacts protein S5. The interaction surface between S4 and S5 is involved in control of translational fidelity.

It localises to the plastid. Its subcellular location is the chloroplast. One of the primary rRNA binding proteins, it binds directly to 16S rRNA where it nucleates assembly of the body of the 30S subunit. Its function is as follows. With S5 and S12 plays an important role in translational accuracy. This is Small ribosomal subunit protein uS4c (rps4) from Equisetum arvense (Field horsetail).